The sequence spans 1512 residues: Mitogen-activated protein kinase kinase kinase 1 (1512 aa).

Positions 1–13 (MAAAAGNRASSSG) are enriched in low complexity. 3 disordered regions span residues 1–37 (MAAAAGNRASSSGFPGARATSPEAGGGGGALKASSAP), 67–181 (SVEL…DRPE), and 213–304 (VKPI…PEET). The residue at position 2 (A2) is an N-acetylalanine. A phosphoserine mark is found at S21 and S35. 3 stretches are compositionally biased toward low complexity: residues 81–99 (AASPPASSTSPSPEPADAA), 129–142 (AAPDSGASSPAAAE), and 150–160 (AAEPSPAAAPA). S137 and S154 each carry phosphoserine. Basic and acidic residues predominate over residues 162 to 181 (REMENKETLKGLHKMDDRPE). Residues 250–260 (SPSPGNSPSGR) show a composition bias toward low complexity. Phosphoserine is present on S275. T285 bears the Phosphothreonine mark. A phosphoserine mark is found at S292, S297, and S300. The SWIM-type zinc finger occupies 338-366 (YRVFIGPQNCSCARGTFCIHLLFVMLRVF). Over residues 416–433 (SNSHTLSSSSTSTSSSEN) the composition is skewed to low complexity. The tract at residues 416 to 436 (SNSHTLSSSSTSTSSSENSIK) is disordered. The RING-type zinc-finger motif lies at 443 to 492 (CPICLLGMLDEESLTVCEDGCRNKLHHHCMSIWAEECRRNREPLICPLCR). A phosphoserine mark is found at S507 and S531. 2 disordered regions span residues 511 to 532 (SPSSLRAAQQQTVQQQPLAGSR) and 602 to 624 (STGNSGGSSGSSPSGGATSGSSQ). A compositionally biased stretch (low complexity) spans 611 to 624 (GSSPSGGATSGSSQ). The residue at position 923 (S923) is a Phosphoserine. A disordered region spans residues 933 to 972 (SISVGPSSSTTTTTTTTEQPKPMVQTKGRPHSQCLNSSPL). A compositionally biased stretch (low complexity) spans 939–949 (SSSTTTTTTTT). S1018 is modified (phosphoserine). Over residues 1032–1041 (NCPENKDSDK) the composition is skewed to basic and acidic residues. Residues 1032–1087 (NCPENKDSDKLSPVFTQSRPLPSSNIHRPKPSRPTPGNTSKQGDPSKNSMTLDLNS) are disordered. At S1043 the chain carries Phosphoserine. 2 stretches are compositionally biased toward polar residues: residues 1045–1057 (VFTQSRPLPSSNI) and 1066–1087 (TPGNTSKQGDPSKNSMTLDLNS). The 266-residue stretch at 1243-1508 (WLKGQQIGLG…SRELLKHPVF (266 aa)) folds into the Protein kinase domain. ATP contacts are provided by residues 1249-1257 (IGLGAFSSC) and K1272. The active-site Proton acceptor is D1369. Phosphothreonine; by autocatalysis is present on residues T1400 and T1412.

This sequence belongs to the protein kinase superfamily. STE Ser/Thr protein kinase family. MAP kinase kinase kinase subfamily. As to quaternary structure, binds both upstream activators and downstream substrates in multimolecular complexes through its N-terminus. Oligomerizes after binding MAP2K4 or TRAF2. Interacts with AXIN1. Interacts (via the kinase catalytic domain) with STK38. Interacts with GRIPAP1. Mg(2+) serves as cofactor. Autophosphorylated.

It carries out the reaction L-seryl-[protein] + ATP = O-phospho-L-seryl-[protein] + ADP + H(+). It catalyses the reaction L-threonyl-[protein] + ATP = O-phospho-L-threonyl-[protein] + ADP + H(+). The enzyme catalyses S-ubiquitinyl-[E2 ubiquitin-conjugating enzyme]-L-cysteine + [acceptor protein]-L-lysine = [E2 ubiquitin-conjugating enzyme]-L-cysteine + N(6)-ubiquitinyl-[acceptor protein]-L-lysine.. Activated by autophosphorylation on Thr-1400 and Thr-1412 following oligomerization. In terms of biological role, component of a protein kinase signal transduction cascade. Activates the ERK and JNK kinase pathways by phosphorylation of MAP2K1 and MAP2K4. May phosphorylate the MAPK8/JNK1 kinase. Activates CHUK and IKBKB, the central protein kinases of the NF-kappa-B pathway. The sequence is that of Mitogen-activated protein kinase kinase kinase 1 (MAP3K1) from Homo sapiens (Human).